A 957-amino-acid polypeptide reads, in one-letter code: Glycine dehydrogenase (decarboxylating) (957 aa).

An N6-(pyridoxal phosphate)lysine modification is found at K702.

It belongs to the GcvP family. The glycine cleavage system is composed of four proteins: P, T, L and H. Requires pyridoxal 5'-phosphate as cofactor.

The enzyme catalyses N(6)-[(R)-lipoyl]-L-lysyl-[glycine-cleavage complex H protein] + glycine + H(+) = N(6)-[(R)-S(8)-aminomethyldihydrolipoyl]-L-lysyl-[glycine-cleavage complex H protein] + CO2. In terms of biological role, the glycine cleavage system catalyzes the degradation of glycine. The P protein binds the alpha-amino group of glycine through its pyridoxal phosphate cofactor; CO(2) is released and the remaining methylamine moiety is then transferred to the lipoamide cofactor of the H protein. The polypeptide is Glycine dehydrogenase (decarboxylating) (Bradyrhizobium sp. (strain BTAi1 / ATCC BAA-1182)).